We begin with the raw amino-acid sequence, 640 residues long: Chaperone protein DnaK (640 aa).

Phosphothreonine; by autocatalysis is present on Thr-201. A compositionally biased stretch (low complexity) spans 603 to 621 (AASADQGGAPGADAGNAGK). The interval 603–625 (AASADQGGAPGADAGNAGKAQDD) is disordered.

This sequence belongs to the heat shock protein 70 family.

Functionally, acts as a chaperone. The sequence is that of Chaperone protein DnaK from Stenotrophomonas maltophilia (strain K279a).